The primary structure comprises 723 residues: F-box protein MAX2 homolog B (723 aa).

The F-box domain maps to 2 to 55 (AKTPIPFTTLNDLPDVILSNIIAAVSDTRSRNATALVCHKWLVLERSTRTSLTL).

Part of a putative SCF (SKP1/Cullin/F-box) ubiquitin ligase complex. Interacts with KAI2IA in the presence of (-)-germacrene D. As to expression, mainly expressed in fully expanded leaves, lateral roots, axillary and shoot apex, and, to a lower extent, in internodes and nodes.

Its subcellular location is the nucleus. It localises to the cytoplasm. Its function is as follows. Component of SCF(ASK-cullin-F-box) E3 ubiquitin ligase complexes, which may mediate the ubiquitination and subsequent proteasomal degradation of target proteins. Is necessary for responses to strigolactones and may be involved in the ubiquitin-mediated degradation of specific proteins that activate axillary growth. Targets probably SMAX1A to degradation upon the formation of an E3 SCF ubiquitin ligase complex (ASK-cullin-F-box) containing MAX2B and KAI2IA in response to (-)-germacrene D in the stigma. This Petunia hybrida (Petunia) protein is F-box protein MAX2 homolog B.